Here is a 101-residue protein sequence, read N- to C-terminus: Small ribosomal subunit protein uS14 (101 aa).

Basic and acidic residues predominate over residues 1 to 10 (MAKKSSIEKN). The segment at 1–25 (MAKKSSIEKNNRRKKMAKNAAPKRE) is disordered.

Belongs to the universal ribosomal protein uS14 family. In terms of assembly, part of the 30S ribosomal subunit. Contacts proteins S3 and S10.

Functionally, binds 16S rRNA, required for the assembly of 30S particles and may also be responsible for determining the conformation of the 16S rRNA at the A site. This Rhodopseudomonas palustris (strain BisA53) protein is Small ribosomal subunit protein uS14.